A 255-amino-acid polypeptide reads, in one-letter code: Cysteine protease avirulence protein AvrRpt2 (255 aa).

The tract at residues 1–50 (MKIAPVAINHSPLSREVPSHAAPTQAKQTNLQSEAGDLDARKSSASSPET) is disordered. The propeptide at 1-71 (MKIAPVAINH…RHKIEVPAFG (71 aa)) is removed in mature form. A determinants of cleavage specificity region spans residues 70–71 (FG). The disordered stretch occupies residues 76 to 100 (KKSSKHETGGSSANADSSSVASDST). Residues 86–98 (SSANADSSSVASD) show a composition bias toward low complexity. C122 (nucleophile) is an active-site residue. Residues H208 and D226 contribute to the active site.

Belongs to the peptidase C70 family. As to quaternary structure, interacts physically with plant cell ROC1 (Arabidopsis single-domain cyclophilin) and RIN4. In terms of processing, autocleaved inside plant cells upon activation by cyclophilin. Cleavage is crucial in subcellular location and in eliciting HR. Inhibited by cyclosporin A (cyclophilin inhibitor).

It is found in the secreted. The protein localises to the host cell membrane. In terms of biological role, effector protein involved in gene-for-gene resistance in plants expressing RPS2. Its thiol protease activity is required for the degradation of plant cell RIN4 and consequent activation of RPS2 during bacterial infection. The activation of RPS2 is sufficient for the induction of hypersensitive response (HR) and plant resistance. Cleavage of RIN4 by AvrRpt2 also interferes with RPM1-mediated resistance activated by either AvrRpm1 or AvrB. Contributes to virulence in plants lacking the resistance protein RPS2 promoting pathogen growth and disease symptoms. Inhibits PAMP (pathogen-associated molecular patterns)-induced signaling compromising the host's basal defense system. Blocks plant callose deposition, flg22 (a peptide corresponding to the most conserved domain of flagellin) induced accumulation of PR-1, PR-2 and PR-5 and activation of GST6 transcription. The mechanism of virulence is unknown, but this activity is independent of ethylene and salicylic acid response pathways and independent of RIN4 disappearance. This Pseudomonas syringae pv. tomato protein is Cysteine protease avirulence protein AvrRpt2 (avrRpt2).